The sequence spans 182 residues: MSKQLNPAVPDQPIVLGKMGSTYGIRGWLRVFSSTENAESIFDYQPWFIQQAGKWQHVELEDWKRHSQDLIIKVKGVDDRDAANLLTNCEIFVDSTQLPALEEDDYYWKDLMGCQVVTTTGYELGKIIDMMETGSNDVMVVKANLKDAFGMKERLVPFLHGQVIKKVDLTAQRVEVDWDPGF.

Positions 102–182 (EEDDYYWKDL…RVEVDWDPGF (81 aa)) constitute a PRC barrel domain.

It belongs to the RimM family. As to quaternary structure, binds ribosomal protein uS19.

It localises to the cytoplasm. In terms of biological role, an accessory protein needed during the final step in the assembly of 30S ribosomal subunit, possibly for assembly of the head region. Essential for efficient processing of 16S rRNA. May be needed both before and after RbfA during the maturation of 16S rRNA. It has affinity for free ribosomal 30S subunits but not for 70S ribosomes. The sequence is that of Ribosome maturation factor RimM from Yersinia pseudotuberculosis serotype IB (strain PB1/+).